We begin with the raw amino-acid sequence, 67 residues long: uncharacterized protein (67 aa).

2 helical membrane passes run 13–32 (IACL…GFIV) and 42–64 (RLTN…TLGL).

It is found in the membrane. This is an uncharacterized protein from Saccharomyces cerevisiae (strain ATCC 204508 / S288c) (Baker's yeast).